Consider the following 291-residue polypeptide: NAD kinase (291 aa).

Asp-73 acts as the Proton acceptor in catalysis. Residues 73 to 74 (DG), 147 to 148 (ND), Arg-175, Asp-177, 188 to 193 (TAYALS), Ala-212, and Gln-246 each bind NAD(+).

It belongs to the NAD kinase family. The cofactor is a divalent metal cation.

Its subcellular location is the cytoplasm. The catalysed reaction is NAD(+) + ATP = ADP + NADP(+) + H(+). Involved in the regulation of the intracellular balance of NAD and NADP, and is a key enzyme in the biosynthesis of NADP. Catalyzes specifically the phosphorylation on 2'-hydroxyl of the adenosine moiety of NAD to yield NADP. The polypeptide is NAD kinase (Polaromonas sp. (strain JS666 / ATCC BAA-500)).